A 213-amino-acid chain; its full sequence is Orotate phosphoribosyltransferase (213 aa).

Residue lysine 26 participates in 5-phospho-alpha-D-ribose 1-diphosphate binding. 34–35 (FF) contacts orotate. 5-phospho-alpha-D-ribose 1-diphosphate contacts are provided by residues 72 to 73 (YK), arginine 99, lysine 100, lysine 103, histidine 105, and 124 to 132 (DDVITAGTA). Orotate-binding residues include threonine 128 and arginine 156.

The protein belongs to the purine/pyrimidine phosphoribosyltransferase family. PyrE subfamily. In terms of assembly, homodimer. Requires Mg(2+) as cofactor.

The enzyme catalyses orotidine 5'-phosphate + diphosphate = orotate + 5-phospho-alpha-D-ribose 1-diphosphate. The protein operates within pyrimidine metabolism; UMP biosynthesis via de novo pathway; UMP from orotate: step 1/2. In terms of biological role, catalyzes the transfer of a ribosyl phosphate group from 5-phosphoribose 1-diphosphate to orotate, leading to the formation of orotidine monophosphate (OMP). In Cronobacter sakazakii (strain ATCC BAA-894) (Enterobacter sakazakii), this protein is Orotate phosphoribosyltransferase.